Here is a 212-residue protein sequence, read N- to C-terminus: uncharacterized protein (212 aa).

2 disordered regions span residues 1–148 (MEKD…LNDL) and 168–190 (EVVT…LSED). Positions 61–70 (KELESEDQGK) are enriched in basic and acidic residues. Over residues 71–85 (DPSSNAEDASCQKNL) the composition is skewed to polar residues. 3 stretches are compositionally biased toward basic and acidic residues: residues 99 to 115 (LGHE…KSDL), 124 to 144 (EGEH…ESIK), and 168 to 180 (EVVT…EKPS).

This is an uncharacterized protein from Homo sapiens (Human).